The following is a 277-amino-acid chain: Large ribosomal subunit protein uL2 (277 aa).

The disordered stretch occupies residues 222–277 (GVAMNPVDHPHGGGEGRTSGGRHPVSPWGKPTKGKRTRSNKATDKFIMRSRHQRKK).

This sequence belongs to the universal ribosomal protein uL2 family. Part of the 50S ribosomal subunit. Forms a bridge to the 30S subunit in the 70S ribosome.

One of the primary rRNA binding proteins. Required for association of the 30S and 50S subunits to form the 70S ribosome, for tRNA binding and peptide bond formation. It has been suggested to have peptidyltransferase activity; this is somewhat controversial. Makes several contacts with the 16S rRNA in the 70S ribosome. The chain is Large ribosomal subunit protein uL2 from Bartonella bacilliformis (strain ATCC 35685 / KC583 / Herrer 020/F12,63).